Consider the following 185-residue polypeptide: Guanosine deaminase (185 aa).

The CMP/dCMP-type deaminase domain occupies 28 to 142; it reads DSDHKFLTQA…AAIAIGFDDF (115 aa). His-80 contributes to the Zn(2+) binding site. Glu-82 acts as the Proton donor in catalysis. The Zn(2+) site is built by Cys-110 and Cys-113.

This sequence belongs to the cytidine and deoxycytidylate deaminase family. As to expression, expressed in roots, leaves, flowers and siliques.

Its subcellular location is the cytoplasm. The protein resides in the nucleus. It catalyses the reaction guanosine + H2O + H(+) = xanthosine + NH4(+). In terms of biological role, catalyzes the hydrolytic deamination of guanosine, producing xanthosine and ammonia. Deaminates exclusively guanosine and 2'-deoxyguanosine but no other aminated purines, pyrimidines, or pterines. Deamination of guanosine by GSDA is the only source of xanthosine production in Arabidopsis. In Arabidopsis thaliana (Mouse-ear cress), this protein is Guanosine deaminase.